We begin with the raw amino-acid sequence, 727 residues long: Glycerol-3-phosphate dehydrogenase, mitochondrial (727 aa).

Residues 1–42 (MAFQKAVKRTVLVCGGALATVLGLSQCSHYRRKQVNLACLKA) constitute a mitochondrion transit peptide. 71-99 (DILVIGGGATGSGCALDAVTRGLKTALVE) serves as a coordination point for FAD. At Y601 the chain carries Phosphotyrosine. 2 consecutive EF-hand domains span residues 623–658 (SDIE…INVK) and 659–694 (IDEN…IQKG). D672, N674, N676, Q678, and E683 together coordinate Ca(2+).

It belongs to the FAD-dependent glycerol-3-phosphate dehydrogenase family. Requires FAD as cofactor.

Its subcellular location is the mitochondrion. It catalyses the reaction a quinone + sn-glycerol 3-phosphate = dihydroxyacetone phosphate + a quinol. It participates in polyol metabolism; glycerol degradation via glycerol kinase pathway; glycerone phosphate from sn-glycerol 3-phosphate (aerobic route): step 1/1. Calcium-binding enhance the activity of the enzyme. Functionally, calcium-responsive mitochondrial glycerol-3-phosphate dehydrogenase which seems to be a key component of the pancreatic beta-cell glucose-sensing device. This is Glycerol-3-phosphate dehydrogenase, mitochondrial (GPD2) from Mesocricetus auratus (Golden hamster).